The primary structure comprises 248 residues: MSFVVIIPARYASTRLPGKPLVDINGKPMIVHVLERARESGAERIIVATDHEDVARAVEAAGGEVCMTRADHQSGTERLAEVVEKCAFSDDTVIVNVQGDEPMIPATIIRQVADNLAQRQVGMATLAVPIHNAEEAFNPNAVKVVLDAEGYALYFSRATIPWDRDRFVKDLETVGDNFLRHLGIYGYRAGFIRRYVTWQPSPLEHIEMLEQLRVLWYGEKIHVAVAQEVPGTGVDTPEDLKRVRAEMR.

It belongs to the KdsB family.

The protein localises to the cytoplasm. It carries out the reaction 3-deoxy-alpha-D-manno-oct-2-ulosonate + CTP = CMP-3-deoxy-beta-D-manno-octulosonate + diphosphate. It functions in the pathway nucleotide-sugar biosynthesis; CMP-3-deoxy-D-manno-octulosonate biosynthesis; CMP-3-deoxy-D-manno-octulosonate from 3-deoxy-D-manno-octulosonate and CTP: step 1/1. Its pathway is bacterial outer membrane biogenesis; lipopolysaccharide biosynthesis. In terms of biological role, activates KDO (a required 8-carbon sugar) for incorporation into bacterial lipopolysaccharide in Gram-negative bacteria. The protein is 3-deoxy-manno-octulosonate cytidylyltransferase of Escherichia coli O127:H6 (strain E2348/69 / EPEC).